A 296-amino-acid chain; its full sequence is 4-hydroxy-tetrahydrodipicolinate synthase (296 aa).

Thr-50 is a pyruvate binding site. Tyr-138 serves as the catalytic Proton donor/acceptor. Lys-166 functions as the Schiff-base intermediate with substrate in the catalytic mechanism. Ile-208 is a binding site for pyruvate.

This sequence belongs to the DapA family. As to quaternary structure, homotetramer; dimer of dimers.

It localises to the cytoplasm. The enzyme catalyses L-aspartate 4-semialdehyde + pyruvate = (2S,4S)-4-hydroxy-2,3,4,5-tetrahydrodipicolinate + H2O + H(+). Its pathway is amino-acid biosynthesis; L-lysine biosynthesis via DAP pathway; (S)-tetrahydrodipicolinate from L-aspartate: step 3/4. Its function is as follows. Catalyzes the condensation of (S)-aspartate-beta-semialdehyde [(S)-ASA] and pyruvate to 4-hydroxy-tetrahydrodipicolinate (HTPA). In Ruthia magnifica subsp. Calyptogena magnifica, this protein is 4-hydroxy-tetrahydrodipicolinate synthase.